The primary structure comprises 277 residues: S-formylglutathione hydrolase FrmB (277 aa).

Active-site charge relay system residues include Ser-145, Asp-221, and His-254.

It belongs to the esterase D family.

The catalysed reaction is S-formylglutathione + H2O = formate + glutathione + H(+). In terms of biological role, serine hydrolase involved in the detoxification of formaldehyde. Hydrolyzes S-formylglutathione to glutathione and formate. This Escherichia coli O6:H1 (strain CFT073 / ATCC 700928 / UPEC) protein is S-formylglutathione hydrolase FrmB (frmB).